We begin with the raw amino-acid sequence, 225 residues long: MIVISHVLGNVKTDPVWAEKLKAYELDYLTLEHGDMYKNSCRKMTEQGKDLGISLERNSLLADGDVLLCDDKHAYAIIVKLILRDVMIIDLTDLLNFSHEMMLKISFELGHALGNQHWKSIIHESQVFVPLSVSHKVMESVIQTHRFTGIHYRFEKGDSILSCLTPSEARLLFGGAEDLGAHVHVDHSHSHDFMGHSHEHEGHRHVHNHAGNSHDNEHDEHHSRR.

Composition is skewed to basic and acidic residues over residues 189–202 and 212–225; these read HSHD…EHEG and NSHD…HSRR. Positions 189–225 are disordered; sequence HSHDFMGHSHEHEGHRHVHNHAGNSHDNEHDEHHSRR.

Belongs to the UreE family.

The protein localises to the cytoplasm. In terms of biological role, involved in urease metallocenter assembly. Binds nickel. Probably functions as a nickel donor during metallocenter assembly. This is Urease accessory protein UreE from Edwardsiella ictaluri.